Reading from the N-terminus, the 192-residue chain is Peroxiredoxin tpx1 (192 aa).

The region spanning 3–161 is the Thioredoxin domain; sequence LQIGKPAPDF…ALRLLDAFQF (159 aa). Catalysis depends on cysteine 48, which acts as the Cysteine sulfenic acid (-SOH) intermediate. Phosphoserine occurs at positions 105 and 148.

Belongs to the peroxiredoxin family. AhpC/Prx1 subfamily. As to quaternary structure, homodimer; disulfide-linked, upon oxidation. Interacts with srx1 in response to oxidative stress. Interacts with pap1 via transient disulfide linkages. In terms of processing, the enzyme can be inactivated by further oxidation of the cysteine sulfenic acid (C(P)-SOH) to sulphinic acid (C(P)-SO2H) instead of its condensation to a disulfide bond. It can be reactivated by forming a transient disulfide bond with sulfiredoxin srx1, which reduces the cysteine sulfinic acid in an ATP- and Mg-dependent manner.

It is found in the cytoplasm. The protein localises to the nucleus. The enzyme catalyses a hydroperoxide + [thioredoxin]-dithiol = an alcohol + [thioredoxin]-disulfide + H2O. Thiol-specific peroxidase that catalyzes the reduction of hydrogen peroxide and organic hydroperoxides to water and alcohols, respectively. Plays a role in cell protection against oxidative stress by detoxifying peroxides and as sensor of hydrogen peroxide-mediated signaling events. Relays hydrogen peroxide as a signal to the transcription factor pap1 by inducing the formation of intramolecular disulfide bonds in pap1, which causes its nuclear accumulation and activation. Reduced by srx1 and this regulation acts as a molecular switch controlling the transcriptional response to hydrogen peroxide. In Schizosaccharomyces pombe (strain 972 / ATCC 24843) (Fission yeast), this protein is Peroxiredoxin tpx1 (tpx1).